A 104-amino-acid chain; its full sequence is L-rhamnose mutarotase (104 aa).

Tyrosine 18 lines the substrate pocket. Histidine 22 functions as the Proton donor in the catalytic mechanism. Substrate contacts are provided by residues tyrosine 41 and 76-77 (WW).

This sequence belongs to the rhamnose mutarotase family. As to quaternary structure, homodimer.

Its subcellular location is the cytoplasm. It carries out the reaction alpha-L-rhamnose = beta-L-rhamnose. Its pathway is carbohydrate metabolism; L-rhamnose metabolism. Functionally, involved in the anomeric conversion of L-rhamnose. This chain is L-rhamnose mutarotase, found in Phocaeicola vulgatus (strain ATCC 8482 / DSM 1447 / JCM 5826 / CCUG 4940 / NBRC 14291 / NCTC 11154) (Bacteroides vulgatus).